Reading from the N-terminus, the 200-residue chain is HVA22-like protein k (200 aa).

The segment at 176–200 is disordered; that stretch reads LGEIANGSPVSETNSDSESDSNHED.

It belongs to the DP1 family.

The polypeptide is HVA22-like protein k (HVA22K) (Arabidopsis thaliana (Mouse-ear cress)).